Consider the following 147-residue polypeptide: Gastrin-releasing peptide (147 aa).

An N-terminal signal peptide occupies residues 1 to 23 (MRGSELSLLLLALVLCQAPRGPA). Methionine amide is present on Met52. Positions 56 to 147 (STDELPPLYA…VLKGKEGTAS (92 aa)) are excised as a propeptide. The tract at residues 95–123 (AGNRSHQPPQDQPLGSLQPTWDPEDGSYF) is disordered. Polar residues predominate over residues 98 to 113 (RSHQPPQDQPLGSLQP).

The protein belongs to the bombesin/neuromedin-B/ranatensin family. Expressed in several dozen cells in the dorsal retrotrapezoid nucleus/parafacial respiratory group (at protein level).

Its subcellular location is the secreted. It is found in the cytoplasmic vesicle. The protein localises to the secretory vesicle lumen. The protein resides in the cell projection. It localises to the neuron projection. Functionally, stimulates the release of gastrin and other gastrointestinal hormones. Contributes to the perception of prurient stimuli and to the transmission of itch signals in the spinal cord that promote scratching behavior. Contributes primarily to nonhistaminergic itch sensation. In one study, shown to act in the amygdala as part of an inhibitory network which inhibits memory specifically related to learned fear. In another study, shown to act on vasoactive intestinal peptide (VIP)-expressing cells in the auditory cortex, most likely via extrasynaptic diffusion from local and long-range sources, to mediate disinhibition of glutamatergic cells via VIP cell-specific GRPR signaling which leads to enhanced auditory fear memories. Contributes to the regulation of food intake. Inhibits voltage-gated sodium channels but enhances voltage-gated potassium channels in hippocampal neurons. Induces sighing by acting directly on the pre-Botzinger complex, a cluster of several thousand neurons in the ventrolateral medulla responsible for inspiration during respiratory activity. Induces an itch response through activation of receptors present on mast cells, triggering mast cell degranulation. The polypeptide is Gastrin-releasing peptide (Grp) (Rattus norvegicus (Rat)).